We begin with the raw amino-acid sequence, 182 residues long: Allergen Bla g 4 (182 aa).

The N-terminal stretch at 1–12 is a signal peptide; it reads AVLALCATDTLA. Residue asparagine 72 is glycosylated (N-linked (GlcNAc...) asparagine).

Belongs to the calycin superfamily. Triabin family.

It localises to the secreted. Probable ligand-binding protein. This chain is Allergen Bla g 4, found in Blattella germanica (German cockroach).